The primary structure comprises 282 residues: MKIVTTVQEMQHITKELRASGKSIGFVPTMGYLHEGHATLLRKAREENEIVVLSVFVNPLQFGPNEDLDRYPRDIDRDENVAKENGVDYLFYPSVEEMYPAEQTTTVEVVKRTDVLCGKQRPGHFAGVATVLMKLFNITLPTRAYFGMKDAQQVAVIEGFVADFNIPVTIVRVDIVREEDGLAKSSRNVYLSQEERKEAPHLYRSLCMAKERIEAGERNAEIITTLVKEYIETYTKGTVDYADLYAYPSLQVVDQIEGRIILAIAVKFENVRLIDNITLTVK.

Residue 30 to 37 (MGYLHEGH) coordinates ATP. His-37 (proton donor) is an active-site residue. Gln-61 provides a ligand contact to (R)-pantoate. Gln-61 provides a ligand contact to beta-alanine. 147–150 (GMKD) contacts ATP. A (R)-pantoate-binding site is contributed by Gln-153. Residues Val-176 and 184-187 (KSSR) contribute to the ATP site.

Belongs to the pantothenate synthetase family. Homodimer.

The protein resides in the cytoplasm. It catalyses the reaction (R)-pantoate + beta-alanine + ATP = (R)-pantothenate + AMP + diphosphate + H(+). Its pathway is cofactor biosynthesis; (R)-pantothenate biosynthesis; (R)-pantothenate from (R)-pantoate and beta-alanine: step 1/1. Its function is as follows. Catalyzes the condensation of pantoate with beta-alanine in an ATP-dependent reaction via a pantoyl-adenylate intermediate. The chain is Pantothenate synthetase from Bacillus cereus (strain ZK / E33L).